Here is a 350-residue protein sequence, read N- to C-terminus: E3 ubiquitin-protein ligase TRIM63 (350 aa).

An RING-type zinc finger spans residues 23–79 (CPICLEMFTKPVVILPCQHNLCRKCANDIFQAANPYWTNRGGSVSMSGGRFRCPSCR). The segment at 74–218 (RCPSCRHEVI…LSQKFDTLYA (145 aa)) is interaction with TTN. The segment at 117–159 (GSHPMCKEHEDEKINIYCLTCEVPTCSLCKVFGAHQACEVAPL) adopts a B box-type zinc-finger fold. 4 residues coordinate Zn(2+): cysteine 122, histidine 125, cysteine 145, and histidine 151. Positions 207 to 269 (EELSQKFDTL…VETAIQSLDE (63 aa)) form a coiled coil. A COS domain is found at 267–325 (LDEPGGATFLSSAKQLIKSNVEASKGCQLGKTEQGFENMDYFTLDLEHIAEALRAIDFG). Acidic residues predominate over residues 325 to 344 (GTDEEEEEFTEEEADEEEGV). The tract at residues 325-350 (GTDEEEEEFTEEEADEEEGVTTEGHQ) is disordered.

As to quaternary structure, homodimer. Homooligomer and heterooligomer. Interacts with SUMO2, titin/TTN and GMEB1. Interacts with TRIM54 and probably with TRIM55. Interacts with TNNI3. Forms a ternary complex with RACK1 and PRKCE. Interacts with CKM.

It localises to the cytoplasm. The protein localises to the nucleus. It is found in the myofibril. The protein resides in the sarcomere. Its subcellular location is the m line. It localises to the z line. It catalyses the reaction S-ubiquitinyl-[E2 ubiquitin-conjugating enzyme]-L-cysteine + [acceptor protein]-L-lysine = [E2 ubiquitin-conjugating enzyme]-L-cysteine + N(6)-ubiquitinyl-[acceptor protein]-L-lysine.. The protein operates within protein modification; protein ubiquitination. E3 ubiquitin ligase. Mediates the ubiquitination and subsequent proteasomal degradation of CKM, GMEB1 and HIBADH. Regulates the proteasomal degradation of muscle proteins under amino acid starvation, where muscle protein is catabolized to provide other organs with amino acids. Inhibits de novo skeletal muscle protein synthesis under amino acid starvation. Regulates proteasomal degradation of cardiac troponin I/TNNI3 and probably of other sarcomeric-associated proteins. May play a role in striated muscle atrophy and hypertrophy by regulating an anti-hypertrophic PKC-mediated signaling pathway. May regulate the organization of myofibrils through TTN in muscle cells. This is E3 ubiquitin-protein ligase TRIM63 (Trim63) from Mus musculus (Mouse).